The sequence spans 944 residues: Putative alpha,alpha-trehalose-phosphate synthase [UDP-forming] 106 kDa subunit (944 aa).

Over residues 73 to 84 the composition is skewed to polar residues; it reads TNAQSNIATPSP. Disordered stretches follow at residues 73 to 113 and 129 to 166; these read TNAQ…NSLS and SKNDGTNLSLPPSRHQSPPPSSVLASQRHHRRHDSELE. The segment covering 101–113 has biased composition (low complexity); it reads PSSDSPSLENSLS. Residues Ser-141, Ser-145, Ser-149, Ser-150, Ser-163, and Ser-177 each carry the phosphoserine modification. The glycosyltransferase stretch occupies residues 173–652; it reads SRSLSFSMNG…AVTFQSLIKE (480 aa). Residue Thr-189 is modified to Phosphothreonine.

In the N-terminal section; belongs to the glycosyltransferase 20 family.

The enzyme catalyses D-glucose 6-phosphate + UDP-alpha-D-glucose = alpha,alpha-trehalose 6-phosphate + UDP + H(+). In Schizosaccharomyces pombe (strain 972 / ATCC 24843) (Fission yeast), this protein is Putative alpha,alpha-trehalose-phosphate synthase [UDP-forming] 106 kDa subunit.